Reading from the N-terminus, the 174-residue chain is Inactive signal peptidase IA (174 aa).

Over 1–7 the chain is Cytoplasmic; the sequence is MKKVVKY. Residues 8–28 form a helical membrane-spanning segment; sequence LISLILAIIIVLFVQTFVIVG. The Extracellular segment spans residues 29–174; it reads HVIPNNDMSP…FSKWTIQFKS (146 aa).

The protein belongs to the peptidase S26 family.

It is found in the cell membrane. Catalytically inactive. The sequence is that of Inactive signal peptidase IA (spsA) from Staphylococcus aureus (strain MRSA252).